Here is a 518-residue protein sequence, read N- to C-terminus: MDASAGGGGNSLPTAGADGAKRRVCYFYDAEVGNYYYGQGHPMKPHRIRMTHALLAHYGLLDQMQVLKPHPARDRDLCRFHADDYVAFLRSVTPETQQDQIRALKRFNVGEDCPVFDGLYSFCQTYAGGSVGGAVKLNHGHDIAINWAGGLHHAKKCEASGFCYVNDIVLAILELLKYHQRVLYVDIDIHHGDGVEEAFYTTDRVMTVSFHKFGDYFPGTGDIRDIGHSKGKYYSLNVPLDDGIDDESYQSLFKPIMGKVMEVFRPGAVVLQCGADSLSGDRLGCFNLSIRGHAECVRFMRSFNVPLLLLGGGGYTIRNVARCWCYETGVALGHELTDKMPPNEYFEYFGPDYTLHVAPSNMENKNTRQQLDDIRSRLLDNLSKLRHAPSVQFQERPPEAELPEQDEDQEDPDERHHADSDVEMDDVKPLDDSGRRSSIQNVRVKRESAETDAADQDGNRVAAENTKGTEPAADGVGSSKQTVPTDASAMAIDEPGSLKVEPDNSNKLQDQPSVHQKT.

Residues 22 to 333 (RRVCYFYDAE…WCYETGVALG (312 aa)) are histone deacetylase. Catalysis depends on H153, which acts as the Proton donor/acceptor. Residues D188, H190, and D276 each contribute to the Zn(2+) site. A disordered region spans residues 387–518 (HAPSVQFQER…QDQPSVHQKT (132 aa)). Acidic residues predominate over residues 401–412 (ELPEQDEDQEDP). The segment covering 413–435 (DERHHADSDVEMDDVKPLDDSGR) has biased composition (basic and acidic residues). Over residues 503–518 (DNSNKLQDQPSVHQKT) the composition is skewed to polar residues.

It belongs to the histone deacetylase family. HD Type 1 subfamily. In terms of assembly, interacts with TPR3. It depends on Zn(2+) as a cofactor. Expressed in roots and leaves.

It is found in the nucleus. It catalyses the reaction N(6)-acetyl-L-lysyl-[histone] + H2O = L-lysyl-[histone] + acetate. Responsible for the deacetylation of lysine residues on the N-terminal part of the core histones (H2A, H2B, H3 and H4). Histone deacetylation gives a tag for epigenetic repression and plays an important role in transcriptional regulation, cell cycle progression and developmental events. Histone deacetylases act via the formation of large multiprotein complexes. Negatively regulates the expression of the NAC48/NAC6 gene that controls root growth in seedlings. Epigenetically represses the expression of NAC48/NAC6 by deacetylating 'Lys-9' (H3K9ac), 'Lys-14' (H3K14ac) and 'Lys-18' (H3K18ac) of histone H3, and 'Lys-5' (H4K5ac), 'Lys-12' (H4K12ac) and 'Lys-16' (H4K16ac) of histone H4. Functions in the regulation of gene expression in the whole genome. Acts as a chromatin remodeling regulator to promote the formation of a repressive chromatin state. Functions with MODD via its interaction with TPR3, to down-regulates the histone acetylation level at BZIP46 target genes. BZIP46 is a positive regulator of abscisic acid (ABA) signaling and drought stress tolerance. This Oryza sativa subsp. japonica (Rice) protein is Histone deacetylase 1.